The chain runs to 330 residues: Ubiquinone biosynthesis protein COQ4, mitochondrial (330 aa).

The N-terminal 31 residues, 1 to 31 (MLQSTKVTKSVLTNVLRVEQRRGFLLSGAAV), are a transit peptide targeting the mitochondrion. Residues His-212, Asp-213, His-216, and Glu-228 each coordinate Zn(2+).

It belongs to the COQ4 family. In terms of assembly, component of a multi-subunit COQ enzyme complex, composed of at least COQ3, COQ4, COQ5, COQ6, COQ7 and COQ9. Zn(2+) is required as a cofactor.

It is found in the mitochondrion inner membrane. It catalyses the reaction a 4-hydroxy-3-methoxy-5-(all-trans-polyprenyl)benzoate + H(+) = a 2-methoxy-6-(all-trans-polyprenyl)phenol + CO2. It functions in the pathway cofactor biosynthesis; ubiquinone biosynthesis. In terms of biological role, lyase that catalyzes the C1-decarboxylation of 4-hydroxy-3-methoxy-5-(all-trans-polyprenyl)benzoic acid into 2-methoxy-6-(all-trans-polyprenyl)phenol during ubiquinone biosynthesis. In Candida glabrata (strain ATCC 2001 / BCRC 20586 / JCM 3761 / NBRC 0622 / NRRL Y-65 / CBS 138) (Yeast), this protein is Ubiquinone biosynthesis protein COQ4, mitochondrial.